We begin with the raw amino-acid sequence, 503 residues long: GMP synthase [glutamine-hydrolyzing] (503 aa).

One can recognise a Glutamine amidotransferase type-1 domain in the interval 3–189 (PVLVVDFGSQ…AFLSSFAAPN (187 aa)). C80 serves as the catalytic Nucleophile. Residues H165 and E167 contribute to the active site. Residues 190–380 (WDPEQTICGT…LGIPKHIVHR (191 aa)) form the GMPS ATP-PPase domain. Residue 217-223 (SGGVDSV) participates in ATP binding.

In terms of assembly, homodimer.

The catalysed reaction is XMP + L-glutamine + ATP + H2O = GMP + L-glutamate + AMP + diphosphate + 2 H(+). The protein operates within purine metabolism; GMP biosynthesis; GMP from XMP (L-Gln route): step 1/1. Catalyzes the synthesis of GMP from XMP. This is GMP synthase [glutamine-hydrolyzing] from Tropheryma whipplei (strain TW08/27) (Whipple's bacillus).